A 273-amino-acid chain; its full sequence is MAIYAIGDIQGCFREFRELVDQCGFDPSSDRLWLVGDLVNRGPASLETLRFVRSLGDAAVSVLGNHDLYLLKIAYAGASGRKRHDTLQQVLEAPDRDELIAWLRTLPLMHLEGGYAMVHAGLLPGWTAEPARALAREVEAVLSGDSCEAFLQHMWGNSPKAWRDDLAGWERLRVIVNAMTRMRFCTPDGRMEFDAKGPPDSAPPNHLPWFAHPNRASSDTTIVCGHWSALGLRMEPNLLALDSGCVWGEKLTAVRLEDRRVFQVHAGKQLGSF.

This sequence belongs to the Ap4A hydrolase family.

It carries out the reaction P(1),P(4)-bis(5'-adenosyl) tetraphosphate + H2O = 2 ADP + 2 H(+). Its function is as follows. Hydrolyzes diadenosine 5',5'''-P1,P4-tetraphosphate to yield ADP. This Aromatoleum aromaticum (strain DSM 19018 / LMG 30748 / EbN1) (Azoarcus sp. (strain EbN1)) protein is Bis(5'-nucleosyl)-tetraphosphatase, symmetrical.